Here is a 353-residue protein sequence, read N- to C-terminus: Photosystem II D2 protein (353 aa).

Position 2 is an N-acetylthreonine (Thr2). A Phosphothreonine modification is found at Thr2. A helical transmembrane segment spans residues 41-61 (CAYFALGGWFTGTTFVTSWYT). A chlorophyll a-binding site is contributed by His118. A helical transmembrane segment spans residues 125–141 (GFMLRQFELARSVQLRP). Pheophytin a-binding residues include Gln130 and Asn143. The helical transmembrane segment at 153-166 (VFVSVFLIYPLGQS) threads the bilayer. His198 serves as a coordination point for chlorophyll a. Residues 208–228 (AALLCAIHGATVENTLFEDGD) traverse the membrane as a helical segment. A plastoquinone is bound by residues His215 and Phe262. Residue His215 coordinates Fe cation. Residue His269 coordinates Fe cation. A helical transmembrane segment spans residues 279-295 (GLWMSAIGVVGLALNLR).

The protein belongs to the reaction center PufL/M/PsbA/D family. In terms of assembly, PSII is composed of 1 copy each of membrane proteins PsbA, PsbB, PsbC, PsbD, PsbE, PsbF, PsbH, PsbI, PsbJ, PsbK, PsbL, PsbM, PsbT, PsbX, PsbY, PsbZ, Psb30/Ycf12, at least 3 peripheral proteins of the oxygen-evolving complex and a large number of cofactors. It forms dimeric complexes. The cofactor is The D1/D2 heterodimer binds P680, chlorophylls that are the primary electron donor of PSII, and subsequent electron acceptors. It shares a non-heme iron and each subunit binds pheophytin, quinone, additional chlorophylls, carotenoids and lipids. There is also a Cl(-1) ion associated with D1 and D2, which is required for oxygen evolution. The PSII complex binds additional chlorophylls, carotenoids and specific lipids..

It localises to the plastid. The protein resides in the chloroplast thylakoid membrane. It catalyses the reaction 2 a plastoquinone + 4 hnu + 2 H2O = 2 a plastoquinol + O2. Functionally, photosystem II (PSII) is a light-driven water:plastoquinone oxidoreductase that uses light energy to abstract electrons from H(2)O, generating O(2) and a proton gradient subsequently used for ATP formation. It consists of a core antenna complex that captures photons, and an electron transfer chain that converts photonic excitation into a charge separation. The D1/D2 (PsbA/PsbD) reaction center heterodimer binds P680, the primary electron donor of PSII as well as several subsequent electron acceptors. D2 is needed for assembly of a stable PSII complex. The chain is Photosystem II D2 protein from Cycas taitungensis (Prince sago).